Here is an 81-residue protein sequence, read N- to C-terminus: Photosystem I iron-sulfur center (81 aa).

4Fe-4S ferredoxin-type domains are found at residues 2–31 (SHSVKIYDTCIGCTQCVRACPLDVLEMVPW) and 39–68 (IAASPRTEDCVGCKRCETACPTDFLSIRVY). [4Fe-4S] cluster contacts are provided by Cys-11, Cys-14, Cys-17, Cys-21, Cys-48, Cys-51, Cys-54, and Cys-58.

The cyanobacterial PSI reaction center is composed of one copy each of PsaA,B,C,D,E,F,I,J,K,L,M and X, and forms trimeric complexes. It depends on [4Fe-4S] cluster as a cofactor.

The protein localises to the cellular thylakoid membrane. It carries out the reaction reduced [plastocyanin] + hnu + oxidized [2Fe-2S]-[ferredoxin] = oxidized [plastocyanin] + reduced [2Fe-2S]-[ferredoxin]. Its function is as follows. Apoprotein for the two 4Fe-4S centers FA and FB of photosystem I (PSI); essential for photochemical activity. FB is the terminal electron acceptor of PSI, donating electrons to ferredoxin. The C-terminus interacts with PsaA/B/D and helps assemble the protein into the PSI complex. Required for binding of PsaD and PsaE to PSI. PSI is a plastocyanin/cytochrome c6-ferredoxin oxidoreductase, converting photonic excitation into a charge separation, which transfers an electron from the donor P700 chlorophyll pair to the spectroscopically characterized acceptors A0, A1, FX, FA and FB in turn. This Synechococcus elongatus (strain ATCC 33912 / PCC 7942 / FACHB-805) (Anacystis nidulans R2) protein is Photosystem I iron-sulfur center.